Consider the following 319-residue polypeptide: Cytochrome f (319 aa).

The signal sequence occupies residues 1 to 34 (MQNRNTYEWTKKMTRLISVLVMIHIITRTSISNA). 4 residues coordinate heme: tyrosine 35, cysteine 55, cysteine 58, and histidine 59. A helical transmembrane segment spans residues 285–305 (VKGLLLFLASVILAQIFLVLK).

This sequence belongs to the cytochrome f family. The 4 large subunits of the cytochrome b6-f complex are cytochrome b6, subunit IV (17 kDa polypeptide, petD), cytochrome f and the Rieske protein, while the 4 small subunits are PetG, PetL, PetM and PetN. The complex functions as a dimer. The cofactor is heme.

It is found in the plastid. The protein resides in the chloroplast thylakoid membrane. Component of the cytochrome b6-f complex, which mediates electron transfer between photosystem II (PSII) and photosystem I (PSI), cyclic electron flow around PSI, and state transitions. This chain is Cytochrome f, found in Pinus koraiensis (Korean pine).